The chain runs to 356 residues: Heme A synthase (356 aa).

The next 5 membrane-spanning stretches (helical) occupy residues Ile-23–Val-43, Phe-105–Leu-125, Ile-141–Val-161, Ala-173–Leu-193, and Ser-212–Ile-232. His-274 is a binding site for heme. A run of 3 helical transmembrane segments spans residues Leu-276–Pro-296, Leu-307–Val-327, and Leu-329–Val-349. His-335 contributes to the heme binding site.

The protein belongs to the COX15/CtaA family. Type 2 subfamily. In terms of assembly, interacts with CtaB. It depends on heme b as a cofactor.

The protein resides in the cell membrane. It carries out the reaction Fe(II)-heme o + 2 A + H2O = Fe(II)-heme a + 2 AH2. It functions in the pathway porphyrin-containing compound metabolism; heme A biosynthesis; heme A from heme O: step 1/1. Functionally, catalyzes the conversion of heme O to heme A by two successive hydroxylations of the methyl group at C8. The first hydroxylation forms heme I, the second hydroxylation results in an unstable dihydroxymethyl group, which spontaneously dehydrates, resulting in the formyl group of heme A. This chain is Heme A synthase, found in Nitrosospira multiformis (strain ATCC 25196 / NCIMB 11849 / C 71).